The following is a 469-amino-acid chain: MEQTKKWGFWLLTAFVVGNMVGSGIFSLPSSLASIASPFGATSAWLLTGAGVLMIALVFGHLSIRKPELTAGPQSYARALFSDPKKGNAAGFTMVWGYWVASWISNVAIITSLAGYLTSFFPILVDKREMFSIGGQEVTLGQLLTFAVCTILLWGTHAILVASINGASKLNFVTTLSKVLGFVFFIVAGLFVFQTSLFGHFYFPVQGENGTSIGIGGQVHNAAISTLWAFVGIESAVILSGRARSQRDVKRATITGLLIALSIYIIVTLITMGVLPHDKLVGSEKPFVDVLYAIVGNAGSVIMALLAILCLFGTMLGWILLGSEVPYQAAKAGDFPAFFAKTNKKGSPVIALIITNVMSQVFIFSVISRTISDAFTFLTTAATLAYLIPYLVSAIYSLKVVIKGETYDQLKGSRVRDGLIAILACAYSVFVIVTGTADLTTFILGIGLFFVGLIVYPFVSNKFQKEKQA.

The next 12 membrane-spanning stretches (helical) occupy residues 8–28 (GFWL…IFSL), 44–64 (AWLL…HLSI), 90–110 (AGFT…VAII), 144–164 (LTFA…VASI), 179–199 (VLGF…SLFG), 213–233 (IGIG…FVGI), 254–274 (ITGL…TMGV), 301–321 (VIMA…WILL), 347–367 (SPVI…FSVI), 375–395 (FTFL…VSAI), 417–437 (DGLI…TGTA), and 439–459 (LTTF…YPFV).

It belongs to the amino acid-polyamine-organocation (APC) superfamily. Basic amino acid/polyamine antiporter (APA) (TC 2.A.3.2) family.

It is found in the cell membrane. It carries out the reaction L-ornithine(in) + L-arginine(out) = L-ornithine(out) + L-arginine(in). In terms of biological role, catalyzes electroneutral exchange between L-arginine and L-ornithine. The sequence is that of Putative arginine/ornithine antiporter (yvsH) from Bacillus subtilis (strain 168).